A 486-amino-acid polypeptide reads, in one-letter code: Protein hold'em (486 aa).

The segment at residues 166–285 is a DNA-binding region (OB); the sequence is IITTNVNLLV…DCRLLLAFAA (120 aa).

It belongs to the MEIOB family. As to quaternary structure, interacts with mei-9 and Ercc1.

Single-stranded DNA-binding protein required for meiosis. May be involved in the resolution of recombination intermediates into crossovers in the meiotic recombination pathway. The protein is Protein hold'em (hdm) of Drosophila melanogaster (Fruit fly).